Consider the following 217-residue polypeptide: MPPRPRFDRRAPVRELPNINDRISYPQLRVVDSDGSQLGVISREEALEVAKERELDLVLVSEKADPPVCRIMDYGKFKFEQEKKAKEAKKKSHQTEVKEVKMRYKIDQHDYDVRIGQAVRFLKAGDKVKCTVIFRGREIQHTALAETLLRRMAKDLEEKAEIQQAPKREGRNMIMFLTPRKTPLVKKEEKEAAPTKAVRTIPAPPRPTAAKVAAQQA.

A disordered region spans residues 179–217 (PRKTPLVKKEEKEAAPTKAVRTIPAPPRPTAAKVAAQQA).

It belongs to the IF-3 family. In terms of assembly, monomer.

Its subcellular location is the cytoplasm. In terms of biological role, IF-3 binds to the 30S ribosomal subunit and shifts the equilibrium between 70S ribosomes and their 50S and 30S subunits in favor of the free subunits, thus enhancing the availability of 30S subunits on which protein synthesis initiation begins. This chain is Translation initiation factor IF-3, found in Parasynechococcus marenigrum (strain WH8102).